We begin with the raw amino-acid sequence, 466 residues long: Argininosuccinate lyase (466 aa).

2-(N(omega)-L-arginino)succinate-binding residues include Ser-27, Asn-114, and Thr-159. Residue His-160 is the Proton acceptor of the active site. The Proton donor role is filled by Ser-281. Residues Asn-289, Tyr-321, Gln-326, and Lys-329 each contribute to the 2-(N(omega)-L-arginino)succinate site.

The protein belongs to the lyase 1 family. Argininosuccinate lyase subfamily. Homotetramer. The N-terminus is blocked. Eye lens.

The enzyme catalyses 2-(N(omega)-L-arginino)succinate = fumarate + L-arginine. It functions in the pathway amino-acid biosynthesis; L-arginine biosynthesis; L-arginine from L-ornithine and carbamoyl phosphate: step 3/3. Delta crystallin, the principal crystallin in embryonic lens, is found only in birds and reptiles. This protein also functions as an enzymatically active argininosuccinate lyase, but it has a low activity. This is Argininosuccinate lyase (ASL) from Columba livia (Rock dove).